A 370-amino-acid polypeptide reads, in one-letter code: Cobalt-precorrin-5B C(1)-methyltransferase (370 aa).

The protein belongs to the CbiD family.

The enzyme catalyses Co-precorrin-5B + S-adenosyl-L-methionine = Co-precorrin-6A + S-adenosyl-L-homocysteine. The protein operates within cofactor biosynthesis; adenosylcobalamin biosynthesis; cob(II)yrinate a,c-diamide from sirohydrochlorin (anaerobic route): step 6/10. In terms of biological role, catalyzes the methylation of C-1 in cobalt-precorrin-5B to form cobalt-precorrin-6A. The protein is Cobalt-precorrin-5B C(1)-methyltransferase of Nostoc sp. (strain PCC 7120 / SAG 25.82 / UTEX 2576).